The primary structure comprises 579 residues: DBIRD complex subunit ZNF326 (579 aa).

The interval 1–124 is mediates transcriptional activation; the sequence is MDFEDDYTHS…YRNSLDSFGG (124 aa). Phosphoserine is present on residues Ser-48, Ser-56, Ser-63, Ser-69, Ser-81, Ser-82, Ser-91, Ser-106, Ser-114, Ser-118, Ser-121, and Ser-137. Lys-140 is covalently cross-linked (Glycyl lysine isopeptide (Lys-Gly) (interchain with G-Cter in SUMO2)). Positions 154-194 are disordered; that stretch reads YSSYSSFSSPHMKPAPVGSRGRGTPAYPESTFGSRNYDAFG. Arg-173 carries the omega-N-methylarginine modification. Residue Ser-212 is modified to Phosphoserine. Arg-235 carries the post-translational modification Omega-N-methylarginine. The Bipartite nuclear localization signal signature appears at 238-260; that stretch reads KRKMIQPFNKPGGTFIKKPKLAK. A Glycyl lysine isopeptide (Lys-Gly) (interchain with G-Cter in SUMO2) cross-link involves residue Lys-240. Lys-247 carries the post-translational modification N6-acetyllysine; alternate. Residue Lys-247 forms a Glycyl lysine isopeptide (Lys-Gly) (interchain with G-Cter in SUMO2); alternate linkage. Residues 248-302 form a disordered region; that stretch reads PGGTFIKKPKLAKPVEKMSLSKSPTKTDPKNEEEEKRRIEARREKQRRRREKNSE. Thr-251 carries the phosphothreonine modification. Glycyl lysine isopeptide (Lys-Gly) (interchain with G-Cter in SUMO2) cross-links involve residues Lys-254 and Lys-264. Ser-270 carries the phosphoserine modification. Residues 272–290 are compositionally biased toward basic and acidic residues; it reads TKTDPKNEEEEKRRIEARR. The C2H2 AKAP95-type 1 zinc-finger motif lies at 314-336; the sequence is CSFCKFRTFEEKDIELHLESASH. Lys-401 is covalently cross-linked (Glycyl lysine isopeptide (Lys-Gly) (interchain with G-Cter in SUMO2)). The C2H2 AKAP95-type 2 zinc finger occupies 407–430; that stretch reads CSACSVYIPALHSSVQQHLKSPDH. Residues Lys-459 and Lys-467 each participate in a glycyl lysine isopeptide (Lys-Gly) (interchain with G-Cter in SUMO2) cross-link. The disordered stretch occupies residues 470–579; sequence NPFEIQDHSQ…GFSVDQAEEN (110 aa). Composition is skewed to acidic residues over residues 483 to 520, 529 to 541, and 549 to 565; these read IEGD…EEVG, GDTE…EGEG, and GEGE…EEAK.

This sequence belongs to the AKAP95 family. Component of the DBIRD complex. Interacts with CCAR2; the interaction is direct.

It localises to the nucleus matrix. In terms of biological role, core component of the DBIRD complex, a multiprotein complex that acts at the interface between core mRNP particles and RNA polymerase II (RNAPII) and integrates transcript elongation with the regulation of alternative splicing: the DBIRD complex affects local transcript elongation rates and alternative splicing of a large set of exons embedded in (A + T)-rich DNA regions. May play a role in neuronal differentiation and is able to bind DNA and activate expression in vitro. The chain is DBIRD complex subunit ZNF326 (ZNF326) from Bos taurus (Bovine).